A 324-amino-acid polypeptide reads, in one-letter code: MITTLITHVLNPLAYIVPVLLAVAFLTLLERKVLGYMQLRKGPNIVGPYGLLQPIADGLKLFIKEPVRPSTSSPFLFLATPMLALTLALTLWAPMPIPYPVTDLNLGVLFVLALSSLAVYSILGSGWASNSKYALIGALRAVAQTISYEVSLGLILLSVIIFTGGFTLQTFNIAQESIWLVVPAWPLAALWYISTLAETNRAPFDFTEGESELVSGFNVEYAGGPFALFFLAEYANILLMNTLSAILFLGATHIPALPELTAMNLMTKAALLSVVFLWVRASYPRFRYDQLMHLVWKSFLPMTLALVLWHLALPIALAGLPPQI.

8 helical membrane-spanning segments follow: residues 9–29 (VLNP…LTLL), 75–95 (FLFL…WAPM), 106–126 (LGVL…LGSG), 146–166 (ISYE…TGGF), 177–197 (SIWL…STLA), 237–257 (ILLM…IPAL), 259–279 (ELTA…FLWV), and 299–319 (FLPM…ALAG).

Belongs to the complex I subunit 1 family.

Its subcellular location is the mitochondrion inner membrane. The enzyme catalyses a ubiquinone + NADH + 5 H(+)(in) = a ubiquinol + NAD(+) + 4 H(+)(out). Core subunit of the mitochondrial membrane respiratory chain NADH dehydrogenase (Complex I) that is believed to belong to the minimal assembly required for catalysis. Complex I functions in the transfer of electrons from NADH to the respiratory chain. The immediate electron acceptor for the enzyme is believed to be ubiquinone. The polypeptide is NADH-ubiquinone oxidoreductase chain 1 (MT-ND1) (Thymallus arcticus (Arctic grayling)).